Consider the following 72-residue polypeptide: Translation initiation factor IF-1 (72 aa).

Residues 1 to 72 (MAKEKDTIRT…PTRGRIVYRK (72 aa)) enclose the S1-like domain.

Belongs to the IF-1 family. In terms of assembly, component of the 30S ribosomal translation pre-initiation complex which assembles on the 30S ribosome in the order IF-2 and IF-3, IF-1 and N-formylmethionyl-tRNA(fMet); mRNA recruitment can occur at any time during PIC assembly.

The protein localises to the cytoplasm. One of the essential components for the initiation of protein synthesis. Stabilizes the binding of IF-2 and IF-3 on the 30S subunit to which N-formylmethionyl-tRNA(fMet) subsequently binds. Helps modulate mRNA selection, yielding the 30S pre-initiation complex (PIC). Upon addition of the 50S ribosomal subunit IF-1, IF-2 and IF-3 are released leaving the mature 70S translation initiation complex. The protein is Translation initiation factor IF-1 of Thermus thermophilus (strain ATCC BAA-163 / DSM 7039 / HB27).